A 500-amino-acid chain; its full sequence is Endothelial lipase (500 aa).

Residues 1-20 (MRNTVFLLGFWSVYCYFPAG) form the signal peptide. Cysteines 64 and 77 form a disulfide. 3 N-linked (GlcNAc...) asparagine glycosylation sites follow: Asn65, Asn80, and Asn136. Residue Ser169 is the Nucleophile of the active site. Asp193 functions as the Charge relay system in the catalytic mechanism. Cys252 and Cys272 are joined by a disulfide. Catalysis depends on His274, which acts as the Charge relay system. 2 disulfides stabilise this stretch: Cys297/Cys316 and Cys308/Cys311. 325–337 (KMRKKRNSKMYLK) is a binding site for heparin. In terms of domain architecture, PLAT spans 347–482 (YHYQLKVHMF…SPGQELWFHK (136 aa)). N-linked (GlcNAc...) asparagine glycosylation is found at Asn359 and Asn393. The cysteines at positions 463 and 483 are disulfide-linked. The N-linked (GlcNAc...) asparagine glycan is linked to Asn491.

Belongs to the AB hydrolase superfamily. Lipase family. Head to tail homodimer. As to expression, expressed in placenta, lung, liver, testis and spleen.

Its subcellular location is the secreted. The enzyme catalyses a triacylglycerol + H2O = a diacylglycerol + a fatty acid + H(+). It carries out the reaction a 1,2-diacyl-sn-glycero-3-phosphocholine + H2O = a 2-acyl-sn-glycero-3-phosphocholine + a fatty acid + H(+). The catalysed reaction is 1,2,3-tri-(9Z-octadecenoyl)-glycerol + H2O = di-(9Z)-octadecenoylglycerol + (9Z)-octadecenoate + H(+). It catalyses the reaction 1,2,3-tributanoylglycerol + H2O = dibutanoylglycerol + butanoate + H(+). The enzyme catalyses 1,2-dihexadecanoyl-sn-glycero-3-phosphocholine + H2O = hexadecanoyl-sn-glycero-3-phosphocholine + hexadecanoate + H(+). Its function is as follows. Exerts both phospholipase and triglyceride lipase activities. More active as a phospholipase than a triglyceride lipase. Hydrolyzes triglycerides, both with short-chain fatty acyl groups (tributyrin) and long-chain fatty acyl groups (triolein) with similar levels of activity toward both types of substrates. Hydrolyzes high density lipoproteins (HDL) more efficiently than other lipoproteins. The protein is Endothelial lipase (Lipg) of Mus musculus (Mouse).